The following is a 263-amino-acid chain: MKGGFTGGDEYQKHFLPRDYLATYYSFDGSPSPEAEMLKFNLECLHKTFGPGGLQGDTLIDIGSGPTIYQVLAACDSFQDITLSDFTDRNREELEKWLKKEPGAYDWTPAVKFACELEGNSGRWEEKEEKLRAAVKRVLKCDVHLGNPLAPAVLPLADCVLTLLAMECACCSLDAYRAALCNLASLLKPGGHLVTTVTLRLPSYMVGKREFSCVALEKEEVEQAVLDAGFDIEQLLHSPQSYSVTNAANNGVCFIVARKKPGP.

At lysine 13 the chain carries N6-succinyllysine. S-adenosyl-L-methionine is bound by residues tyrosine 20, tyrosine 25, glycine 63, tyrosine 69, 85–87 (DFT), and asparagine 90. An N6-succinyllysine modification is found at lysine 96. S-adenosyl-L-methionine-binding positions include 142 to 143 (DV) and leucine 163.

The protein belongs to the class I-like SAM-binding methyltransferase superfamily. NNMT/PNMT/TEMT family. As to quaternary structure, monomer. Widely expressed. The highest levels were in thyroid, adrenal gland, adult and fetal lung. Intermediate levels in heart, placenta, skeletal muscle, testis, small intestine, pancreas, stomach, spinal cord, lymph node and trachea. Very low levels in adult and fetal kidney and liver, in adult spleen, thymus, ovary, colon and bone marrow. Not expressed in peripheral blood leukocytes and brain.

It is found in the cytoplasm. The catalysed reaction is a tertiary amine + S-adenosyl-L-methionine = a methylated tertiary amine + S-adenosyl-L-homocysteine + H(+). It catalyses the reaction a secondary amine + S-adenosyl-L-methionine = a methylated secondary amine + S-adenosyl-L-homocysteine + H(+). It carries out the reaction a primary amine + S-adenosyl-L-methionine = a methylated primary amine + S-adenosyl-L-homocysteine + H(+). The enzyme catalyses dimethyl sulfide + S-adenosyl-L-methionine = trimethylsulfonium + S-adenosyl-L-homocysteine. Functionally, functions as a thioether S-methyltransferase and is active with a variety of thioethers and the corresponding selenium and tellurium compounds, including 3-methylthiopropionaldehyde, dimethyl selenide, dimethyl telluride, 2-methylthioethylamine, 2-methylthioethanol, methyl-n-propyl sulfide and diethyl sulfide. Plays an important role in the detoxification of selenium compounds. Catalyzes the N-methylation of tryptamine and structurally related compounds. In Homo sapiens (Human), this protein is Indolethylamine N-methyltransferase (INMT).